Here is a 409-residue protein sequence, read N- to C-terminus: Autotransproter heptosyltransferase BAHTCr (409 aa).

ADP-D-glycero-beta-D-manno-heptose is bound by residues Thr-107, Leu-108, and Gly-109. The active-site Proton acceptor is Asp-110. Gln-224, Thr-226, Lys-230, Arg-257, Gly-302, and Glu-326 together coordinate ADP-D-glycero-beta-D-manno-heptose. The Fe(3+) site is built by Cys-339, Cys-342, Cys-358, and Cys-370.

Belongs to the glycosyltransferase 9 family. As to quaternary structure, homododecamer composed of 6 homodimers forming a ring. Requires Fe(3+) as cofactor.

The protein localises to the cytoplasm. The enzyme catalyses ADP-D-glycero-beta-D-manno-heptose + L-seryl-[protein] = O-(D-glycero-alpha-D-manno-heptosyl)-L-seryl-[protein] + ADP + H(+). The catalysed reaction is ADP-L-glycero-beta-D-manno-heptose + L-seryl-[protein] = O-(L-glycero-alpha-D-manno-heptosyl)-L-seryl-[protein] + ADP + H(+). Functionally, glycosylates autotransporter CARC. By glycosylating CARC, involved in the colonization of the mouse host gastrointestinal tract. This Citrobacter rodentium (strain ICC168) (Citrobacter freundii biotype 4280) protein is Autotransproter heptosyltransferase BAHTCr.